The chain runs to 230 residues: 2,3-bisphosphoglycerate-dependent phosphoglycerate mutase (230 aa).

Substrate contacts are provided by residues R8–N15, T21–G22, R60, E87–Y90, K98, R114–R115, and G183–N184. H9 serves as the catalytic Tele-phosphohistidine intermediate. Catalysis depends on E87, which acts as the Proton donor/acceptor.

Belongs to the phosphoglycerate mutase family. BPG-dependent PGAM subfamily.

It carries out the reaction (2R)-2-phosphoglycerate = (2R)-3-phosphoglycerate. It functions in the pathway carbohydrate degradation; glycolysis; pyruvate from D-glyceraldehyde 3-phosphate: step 3/5. Its function is as follows. Catalyzes the interconversion of 2-phosphoglycerate and 3-phosphoglycerate. In Streptococcus thermophilus (strain CNRZ 1066), this protein is 2,3-bisphosphoglycerate-dependent phosphoglycerate mutase.